A 572-amino-acid polypeptide reads, in one-letter code: Putative lysozyme-like protein (572 aa).

Positions M1–A17 are cleaved as a signal peptide. Low complexity predominate over residues M145–G165. Disordered stretches follow at residues M145–G199, S231–V297, A326–K388, and A433–G469. Residues S166 to L185 are compositionally biased toward gly residues. The segment covering S231–S240 has biased composition (low complexity). Residues S258–L282 are compositionally biased toward gly residues. The span at A326–G358 shows a compositional bias: low complexity. Residues S359–L382 are compositionally biased toward gly residues. The segment covering A433–G452 has biased composition (low complexity). Over residues S453–G469 the composition is skewed to gly residues.

It belongs to the dictyostelium lysozyme family.

The chain is Putative lysozyme-like protein (alyL) from Dictyostelium discoideum (Social amoeba).